Consider the following 229-residue polypeptide: Sugar fermentation stimulation protein homolog (229 aa).

The protein belongs to the SfsA family.

This chain is Sugar fermentation stimulation protein homolog, found in Caldanaerobacter subterraneus subsp. tengcongensis (strain DSM 15242 / JCM 11007 / NBRC 100824 / MB4) (Thermoanaerobacter tengcongensis).